The chain runs to 808 residues: LADVEEEQMIQSVDRTAVTGASYFTSVDQSSVHTAEVGSHQPEPLKTSVDKPGSKRTQGEKFFLIHSADWLTTHALFHEVAKLDVVKLLYNEQFAVQGLLRYHTYARFGIEIQVQINPTPFQQGGLICAMVPGDQSYGSIASLTVYPHGLLNCNINNVVRIKVPFIYTRGAYHFKDPQYPVWELTIRVWSELNIGTGTSAYTSLNVLARFTDLELHGLTPLSTQMMRNEFRVSTTENVVNLSNYEDARAKMSFALDQEDWKSDASQGGGIKITHFTTWTSIPTLAAQFPFNASDSVGQQIKVIPVDPYFFQMTNTNPEQKCITALASICQMFCFWRGDLVFDFQVFPTKYHSGRLLFCFVPGNELIDVSHITLKQATTAPCAVMDITGVQSTLRFRVPWISDTPYRVNRYTKSSHQKGEYTAIGKLIVYCYNRLTSPSNVASHVRVNVYLSAINLECFAPLYHAMDVTTQVGDDSGGFSTTVSTKQNVPDPQVGITTVKDLKGRANQGKMDISGVQAPVGAITTIEDPVLAKKVPETFPELKPGESRHTSDHMSIYKFMGRSHFLCTFTFNSNNKEYTFPITLSSTSNPPHGLPATLRWFFNLFQLYRGPLDLTIIITGATDVDGMAWFTPVGLAVDTPWVEKESALSIDYKTALGAVRFNTRRTGNDQIRLPWYSYLYAVSGALDGLGDKTDSTFGLVSIQIANYNHSDEYLSFSCYLSVTEQSEFYFPRAPLNTNAMMSSETVMDRIALGDLESSVDDPRTEEDRKFESHIEKRKPYKELRLEVGKQRLKYAQEELSNEVLPPPRK.

Positions 34–55 are disordered; the sequence is TAEVGSHQPEPLKTSVDKPGSK. Short sequence motifs ((L)YPX(n)L motif) lie at residues 146-150 and 179-184; these read YPHGL and YPVWEL.

It belongs to the picornaviridae polyprotein family. Homopentamer. Homooligomer. In terms of assembly, interacts with capsid protein VP2. Interacts with capsid protein VP3. As to quaternary structure, interacts with capsid protein VP1. Interacts with capsid protein VP3. Interacts with capsid protein VP1. Interacts with capsid protein VP2. Post-translationally, specific enzymatic cleavages by viral protease in vivo yield a variety of precursors and mature proteins. Polyprotein processing intermediates are produced, such as P1-2A which is a functional precursor of the structural proteins, VP0 which is a VP4-VP2 precursor, VP1-2A precursor, 3ABC precursor which is a stable and catalytically active precursor of 3A, 3B and 3C proteins, 3AB and 3CD precursors. The assembly signal 2A is removed from VP1-2A by a host protease, possibly host Cathepsin L. This cleavage occurs over a region of 3 amino-acids probably generating VP1 proteins with heterogeneous C-termini. In terms of processing, during virion maturation, immature virions are rendered infectious following cleavage of VP0 into VP4 and VP2. This maturation seems to be an autocatalytic event triggered by the presence of RNA in the capsid and is followed by a conformational change of the particle. The assembly signal 2A is removed from VP1-2A by a host protease, possibly host Cathepsin L in naked virions. This cleavage does not occur in enveloped virions. This cleavage occurs over a region of 3 amino-acids probably generating VP1 proteins with heterogeneous C-termini. Post-translationally, unlike other picornaviruses, does not seem to be myristoylated.

It is found in the virion. The protein resides in the host endosome. The protein localises to the host multivesicular body. Functionally, capsid proteins VP1, VP2, and VP3 form a closed capsid enclosing the viral positive strand RNA genome. All these proteins contain a beta-sheet structure called beta-barrel jelly roll. Together they form an icosahedral capsid (T=3) composed of 60 copies of each VP1, VP2, and VP3, with a diameter of approximately 300 Angstroms. VP1 is situated at the 12 fivefold axes, whereas VP2 and VP3 are located at the quasi-sixfold axes. The naked capsid interacts with the host receptor HAVCR1 to provide virion attachment to and probably entry into the target cell. In terms of biological role, VP0 precursor is a component of the immature procapsids. Plays a role in the assembly of the 12 pentamers into an icosahedral structure. Has not been detected in mature virions, supposedly owing to its small size. Its function is as follows. Precursor component of immature procapsids that corresponds to an extended form of the structural protein VP1. After maturation, possibly by the host Cathepsin L, the assembly signal 2A is cleaved to give rise to the mature VP1 protein. The protein is Genome polyprotein of Human hepatitis A virus genotype IIIA (isolate GA76) (HHAV).